Consider the following 394-residue polypeptide: NADH-quinone oxidoreductase subunit D 2 (394 aa).

Belongs to the complex I 49 kDa subunit family. As to quaternary structure, NDH-1 is composed of 14 different subunits. Subunits NuoB, C, D, E, F, and G constitute the peripheral sector of the complex.

The protein localises to the cell membrane. The enzyme catalyses a quinone + NADH + 5 H(+)(in) = a quinol + NAD(+) + 4 H(+)(out). Its function is as follows. NDH-1 shuttles electrons from NADH, via FMN and iron-sulfur (Fe-S) centers, to quinones in the respiratory chain. The immediate electron acceptor for the enzyme in this species is believed to be a menaquinone. Couples the redox reaction to proton translocation (for every two electrons transferred, four hydrogen ions are translocated across the cytoplasmic membrane), and thus conserves the redox energy in a proton gradient. This Streptomyces griseus subsp. griseus (strain JCM 4626 / CBS 651.72 / NBRC 13350 / KCC S-0626 / ISP 5235) protein is NADH-quinone oxidoreductase subunit D 2.